The following is a 196-amino-acid chain: Protein LIGHT-DEPENDENT SHORT HYPOCOTYLS 6 (196 aa).

Positions 1–16 are enriched in basic and acidic residues; sequence MESADSGRSDPVKGDD. Disordered stretches follow at residues 1–36 and 149–196; these read MESA…ESQK and ARGI…AVPP. An ALOG domain is found at 31 to 158; the sequence is RYESQKRRDW…ARGIPYEKKK (128 aa). A Nuclear localization signal motif is present at residues 156-160; sequence KKKRK.

Belongs to the plant homeotic and developmental regulators ALOG protein family.

Its subcellular location is the nucleus. Its function is as follows. Probable transcription regulator that acts as a developmental regulator by promoting cell growth in response to light. This Arabidopsis thaliana (Mouse-ear cress) protein is Protein LIGHT-DEPENDENT SHORT HYPOCOTYLS 6 (LSH6).